A 76-amino-acid polypeptide reads, in one-letter code: Kappa-actitoxin-Avd4o (76 aa).

A signal peptide spans 1–19; sequence MNKALFLSLVVLCAAVVFA. The propeptide occupies 20 to 33; it reads AEDLQKAKHAPFKL. 3 disulfide bridges follow: Cys-37–Cys-72, Cys-39–Cys-65, and Cys-55–Cys-73.

It belongs to the sea anemone type 3 (BDS) potassium channel toxin family. As to expression, experimental results show no expression in the ectodermal tissue from the distal and proximal tentacles, body wall, and oral disk. Since paralogs are expressed in this tissue, an expression of this toxin in this tissue is probable. The negative results could be explained by the very low abundance of EST sequences.

It is found in the secreted. It localises to the nematocyst. Its function is as follows. Blocks Kv3 voltage-gated potassium channels. Reduces blood pressure. The sequence is that of Kappa-actitoxin-Avd4o from Anemonia viridis (Snakelocks anemone).